The following is a 79-amino-acid chain: D-alanyl carrier protein (79 aa).

One can recognise a Carrier domain in the interval 2-79; the sequence is AEFKEQVLDI…MVIKKLEEIR (78 aa). Ser37 is modified (O-(pantetheine 4'-phosphoryl)serine).

The protein belongs to the DltC family. In terms of processing, 4'-phosphopantetheine is transferred from CoA to a specific serine of apo-DCP.

It localises to the cytoplasm. It participates in cell wall biogenesis; lipoteichoic acid biosynthesis. In terms of biological role, carrier protein involved in the D-alanylation of lipoteichoic acid (LTA). The loading of thioester-linked D-alanine onto DltC is catalyzed by D-alanine--D-alanyl carrier protein ligase DltA. The DltC-carried D-alanyl group is further transferred to cell membrane phosphatidylglycerol (PG) by forming an ester bond, probably catalyzed by DltD. D-alanylation of LTA plays an important role in modulating the properties of the cell wall in Gram-positive bacteria, influencing the net charge of the cell wall. In Bacillus anthracis (strain CDC 684 / NRRL 3495), this protein is D-alanyl carrier protein.